A 520-amino-acid chain; its full sequence is Cytochrome P450 84A1 (520 aa).

Met-1 carries the N-acetylmethionine modification. Residues 12-32 form a helical membrane-spanning segment; the sequence is LSDPTTSLVIVVSLFIFISFI. Cys-458 contacts heme.

It belongs to the cytochrome P450 family. Heme is required as a cofactor.

The protein resides in the membrane. It functions in the pathway aromatic compound metabolism; phenylpropanoid biosynthesis. The chain is Cytochrome P450 84A1 (CYP84A1) from Arabidopsis thaliana (Mouse-ear cress).